The sequence spans 241 residues: UDP-2,3-diacylglucosamine hydrolase (241 aa).

Asp-8, His-10, Asp-41, Asn-78, and His-113 together coordinate Mn(2+). 78–79 contributes to the substrate binding site; it reads NR. Residues Asp-121, Ser-159, Asn-163, Lys-166, and His-194 each coordinate substrate. Residues His-194 and His-196 each coordinate Mn(2+).

This sequence belongs to the LpxH family. Requires Mn(2+) as cofactor.

The protein resides in the cell inner membrane. It catalyses the reaction UDP-2-N,3-O-bis[(3R)-3-hydroxytetradecanoyl]-alpha-D-glucosamine + H2O = 2-N,3-O-bis[(3R)-3-hydroxytetradecanoyl]-alpha-D-glucosaminyl 1-phosphate + UMP + 2 H(+). It functions in the pathway glycolipid biosynthesis; lipid IV(A) biosynthesis; lipid IV(A) from (3R)-3-hydroxytetradecanoyl-[acyl-carrier-protein] and UDP-N-acetyl-alpha-D-glucosamine: step 4/6. Functionally, hydrolyzes the pyrophosphate bond of UDP-2,3-diacylglucosamine to yield 2,3-diacylglucosamine 1-phosphate (lipid X) and UMP by catalyzing the attack of water at the alpha-P atom. Involved in the biosynthesis of lipid A, a phosphorylated glycolipid that anchors the lipopolysaccharide to the outer membrane of the cell. The polypeptide is UDP-2,3-diacylglucosamine hydrolase (Shewanella putrefaciens (strain CN-32 / ATCC BAA-453)).